Here is a 948-residue protein sequence, read N- to C-terminus: Putative helicase 009L (948 aa).

Residues 64–243 (LSEDTPYREL…ADVLNLILPQ (180 aa)) enclose the Helicase ATP-binding domain. ATP is bound at residue 77–84 (HAPGTGKT). The DEAH box motif lies at 187–190 (DEVH). Residues 371–554 (VKYDYLVRVA…AVERILMTSA (184 aa)) enclose the Helicase C-terminal domain.

The chain is Putative helicase 009L from Frog virus 3 (isolate Goorha) (FV-3).